Reading from the N-terminus, the 949-residue chain is Leucine--tRNA ligase (949 aa).

Residues 68–79 carry the 'HIGH' region motif; it reads PYPSGEGLHVGH. The interval 540–562 is disordered; that stretch reads VPDYSPVSFDPDDAGSEPSPPLG. The 'KMSKS' region signature appears at 722–726; that stretch reads KIGKS. Lysine 725 contributes to the ATP binding site.

The protein belongs to the class-I aminoacyl-tRNA synthetase family.

The protein localises to the cytoplasm. The enzyme catalyses tRNA(Leu) + L-leucine + ATP = L-leucyl-tRNA(Leu) + AMP + diphosphate. The chain is Leucine--tRNA ligase from Mycolicibacterium gilvum (strain PYR-GCK) (Mycobacterium gilvum (strain PYR-GCK)).